A 287-amino-acid polypeptide reads, in one-letter code: 4-diphosphocytidyl-2-C-methyl-D-erythritol kinase (287 aa).

The active site involves Lys-12. 97–107 (PMGGGLGGGSS) is an ATP binding site. Asp-139 is a catalytic residue.

Belongs to the GHMP kinase family. IspE subfamily.

It carries out the reaction 4-CDP-2-C-methyl-D-erythritol + ATP = 4-CDP-2-C-methyl-D-erythritol 2-phosphate + ADP + H(+). It functions in the pathway isoprenoid biosynthesis; isopentenyl diphosphate biosynthesis via DXP pathway; isopentenyl diphosphate from 1-deoxy-D-xylulose 5-phosphate: step 3/6. In terms of biological role, catalyzes the phosphorylation of the position 2 hydroxy group of 4-diphosphocytidyl-2C-methyl-D-erythritol. The polypeptide is 4-diphosphocytidyl-2-C-methyl-D-erythritol kinase (Marinobacter nauticus (strain ATCC 700491 / DSM 11845 / VT8) (Marinobacter aquaeolei)).